Reading from the N-terminus, the 238-residue chain is ATP-dependent dethiobiotin synthetase BioD (238 aa).

An ATP-binding site is contributed by 13-18; sequence DIGKTF. Thr-17 lines the Mg(2+) pocket. Lys-38 is an active-site residue. Ser-42 contributes to the substrate binding site. ATP is bound by residues Asp-55, 116-119, 209-211, and Asn-216; these read EGSG and PRI. The Mg(2+) site is built by Asp-55 and Glu-116.

This sequence belongs to the dethiobiotin synthetase family. In terms of assembly, homodimer. Mg(2+) serves as cofactor.

It is found in the cytoplasm. The catalysed reaction is (7R,8S)-7,8-diammoniononanoate + CO2 + ATP = (4R,5S)-dethiobiotin + ADP + phosphate + 3 H(+). Its pathway is cofactor biosynthesis; biotin biosynthesis; biotin from 7,8-diaminononanoate: step 1/2. Its function is as follows. Catalyzes a mechanistically unusual reaction, the ATP-dependent insertion of CO2 between the N7 and N8 nitrogen atoms of 7,8-diaminopelargonic acid (DAPA, also called 7,8-diammoniononanoate) to form a ureido ring. The polypeptide is ATP-dependent dethiobiotin synthetase BioD (Clostridium novyi (strain NT)).